The primary structure comprises 381 residues: MKRDYYEILGVARNATPEEIKKAYRKLARKYHPDVNKDDPNAAEKFKEINEAYEVLSDPEKRARYDQFGHAGVDGNFAGQGGFGGGAGINFEDIFSGFGGFGDLFDMVFGSGRKARQGPVPGDDIEAVLELTLEEAVFGGEKELRVTRTETCGHCHGNGAEPGTPIITCPTCQGRGQIHQEVKTLFGRMVRSQVCSTCRGEGKIPKTPCRECGGSGLVRKTRSITVKIPPGIDHGHRLRIAGGGEAGRFGGPPGDLYVYIKIKPHKLFKREDIHLKLEKEISFVQAALGAKVEIPTIDGGTEILEIPEGTQTGTVFTIKGKGVPVVNGSGRGNLYVTVKVVTPTKLTERQKQLLREFEEISKQKEETFKEKFNKFKNKFAL.

The 66-residue stretch at Asp-4–Gly-69 folds into the J domain. The CR-type zinc-finger motif lies at Gly-139–Thr-221. Residues Cys-152, Cys-155, Cys-169, Cys-172, Cys-195, Cys-198, Cys-209, and Cys-212 each coordinate Zn(2+). CXXCXGXG motif repeat units follow at residues Cys-152–Gly-159, Cys-169–Gly-176, Cys-195–Gly-202, and Cys-209–Gly-216.

It belongs to the DnaJ family. As to quaternary structure, homodimer. Zn(2+) serves as cofactor.

It is found in the cytoplasm. Functionally, participates actively in the response to hyperosmotic and heat shock by preventing the aggregation of stress-denatured proteins and by disaggregating proteins, also in an autonomous, DnaK-independent fashion. Unfolded proteins bind initially to DnaJ; upon interaction with the DnaJ-bound protein, DnaK hydrolyzes its bound ATP, resulting in the formation of a stable complex. GrpE releases ADP from DnaK; ATP binding to DnaK triggers the release of the substrate protein, thus completing the reaction cycle. Several rounds of ATP-dependent interactions between DnaJ, DnaK and GrpE are required for fully efficient folding. Also involved, together with DnaK and GrpE, in the DNA replication of plasmids through activation of initiation proteins. This chain is Chaperone protein DnaJ, found in Carboxydothermus hydrogenoformans (strain ATCC BAA-161 / DSM 6008 / Z-2901).